We begin with the raw amino-acid sequence, 89 residues long: Small ribosomal subunit protein uS19 (89 aa).

The protein belongs to the universal ribosomal protein uS19 family.

Functionally, protein S19 forms a complex with S13 that binds strongly to the 16S ribosomal RNA. This is Small ribosomal subunit protein uS19 from Xylella fastidiosa (strain M23).